The sequence spans 1155 residues: Pesticidal crystal protein Cry1Ab (1155 aa).

This sequence belongs to the delta endotoxin family.

Promotes colloidosmotic lysis by binding to the midgut epithelial cells of many lepidopteran larvae. The chain is Pesticidal crystal protein Cry1Ab (cry1Ab) from Bacillus thuringiensis subsp. aizawai.